A 315-amino-acid polypeptide reads, in one-letter code: Ribosomal protein L11 methyltransferase (315 aa).

S-adenosyl-L-methionine is bound by residues T164, G185, D207, and N249.

The protein belongs to the methyltransferase superfamily. PrmA family.

It localises to the cytoplasm. The catalysed reaction is L-lysyl-[protein] + 3 S-adenosyl-L-methionine = N(6),N(6),N(6)-trimethyl-L-lysyl-[protein] + 3 S-adenosyl-L-homocysteine + 3 H(+). Methylates ribosomal protein L11. This Lactobacillus gasseri (strain ATCC 33323 / DSM 20243 / BCRC 14619 / CIP 102991 / JCM 1131 / KCTC 3163 / NCIMB 11718 / NCTC 13722 / AM63) protein is Ribosomal protein L11 methyltransferase.